Reading from the N-terminus, the 430-residue chain is Arrestin-related trafficking adapter 10 (430 aa).

The interval 55–75 is disordered; sequence AEADRHSSRLPQDPQTQYTKE. The segment covering 63–72 has biased composition (polar residues); the sequence is RLPQDPQTQY.

The protein belongs to the ART10 family.

It localises to the cytoplasm. May regulate endocytosis by recruiting RSP5 ubiquitin ligase activity to specific plasma membrane proteins in response to extracellular stimuli. The protein is Arrestin-related trafficking adapter 10 (ART10) of Eremothecium gossypii (strain ATCC 10895 / CBS 109.51 / FGSC 9923 / NRRL Y-1056) (Yeast).